A 325-amino-acid chain; its full sequence is ADP-ribose glycohydrolase MACROD1 (325 aa).

An N6-succinyllysine mark is found at lysine 96, lysine 103, and lysine 129. Lysine 138 is covalently cross-linked (Glycyl lysine isopeptide (Lys-Gly) (interchain with G-Cter in SUMO2)). The Macro domain maps to 141 to 322 (EPRYKKDKQL…IYRSRLPHYF (182 aa)). 159-161 (SDI) is a binding site for substrate. N6-acetyllysine is present on lysine 163. Residues 172–174 (AAN), 179–184 (GGGGVD), 267–273 (ISTGVFG), and phenylalanine 306 each bind substrate.

This sequence belongs to the MacroD-type family. MacroD1/2-like subfamily. In terms of assembly, interacts with ESR1; Interacts in a manner that is estrogen independent but is enhanced by estrogen. Interacts (via macro domain) with AR.

It localises to the nucleus. It carries out the reaction 3''-O-acetyl-ADP-D-ribose + H2O = ADP-D-ribose + acetate + H(+). The enzyme catalyses 2''-O-acetyl-ADP-D-ribose + H2O = ADP-D-ribose + acetate + H(+). The catalysed reaction is 4-O-(ADP-D-ribosyl)-L-aspartyl-[protein] + H2O = L-aspartyl-[protein] + ADP-D-ribose + H(+). It catalyses the reaction 5-O-(ADP-D-ribosyl)-L-glutamyl-[protein] + H2O = L-glutamyl-[protein] + ADP-D-ribose + H(+). It carries out the reaction alpha-NAD(+) + H2O = ADP-D-ribose + nicotinamide + H(+). Its activity is regulated as follows. Subject to competitive inhibition by the product ADP-ribose. In terms of biological role, removes ADP-ribose from aspartate and glutamate residues in proteins bearing a single ADP-ribose moiety. Inactive towards proteins bearing poly-ADP-ribose. Deacetylates O-acetyl-ADP ribose, a signaling molecule generated by the deacetylation of acetylated lysine residues in histones and other proteins. Plays a role in estrogen signaling. Binds to androgen receptor (AR) and amplifies the transactivation function of AR in response to androgen. May play an important role in carcinogenesis and/or progression of hormone-dependent cancers by feed-forward mechanism that activates ESR1 transactivation. Could be an ESR1 coactivator, providing a positive feedback regulatory loop for ESR1 signal transduction. Could be involved in invasive growth by down-regulating CDH1 in endometrial cancer cells. Enhances ESR1-mediated transcription activity. In Homo sapiens (Human), this protein is ADP-ribose glycohydrolase MACROD1.